The following is a 393-amino-acid chain: Riboflavin biosynthesis protein RibBA (393 aa).

The interval 1-200 is DHBP synthase; it reads MQLDSIDTAL…IEDLEKYRKS (200 aa). D-ribulose 5-phosphate contacts are provided by residues 27 to 28, Asp-32, 139 to 143, and Glu-163; these read RE and RRGHT. Glu-28 serves as a coordination point for Mg(2+). Residue His-142 coordinates Mg(2+). A GTP cyclohydrolase II region spans residues 201–393; it reads SISKLDAKAK…TKKEKMGHLI (193 aa). 249–253 contacts GTP; sequence RIHSA. Zn(2+)-binding residues include Cys-254, Cys-265, and Cys-267. GTP contacts are provided by residues Gln-270, 291–293, and Thr-313; that span reads EGR. The Proton acceptor; for GTP cyclohydrolase activity role is filled by Asp-325. The Nucleophile; for GTP cyclohydrolase activity role is filled by Arg-327. Positions 348 and 353 each coordinate GTP.

It in the N-terminal section; belongs to the DHBP synthase family. The protein in the C-terminal section; belongs to the GTP cyclohydrolase II family. Mg(2+) serves as cofactor. It depends on Mn(2+) as a cofactor. The cofactor is Zn(2+).

The catalysed reaction is D-ribulose 5-phosphate = (2S)-2-hydroxy-3-oxobutyl phosphate + formate + H(+). It carries out the reaction GTP + 4 H2O = 2,5-diamino-6-hydroxy-4-(5-phosphoribosylamino)-pyrimidine + formate + 2 phosphate + 3 H(+). The protein operates within cofactor biosynthesis; riboflavin biosynthesis; 2-hydroxy-3-oxobutyl phosphate from D-ribulose 5-phosphate: step 1/1. Its pathway is cofactor biosynthesis; riboflavin biosynthesis; 5-amino-6-(D-ribitylamino)uracil from GTP: step 1/4. Its function is as follows. Catalyzes the conversion of D-ribulose 5-phosphate to formate and 3,4-dihydroxy-2-butanone 4-phosphate. Catalyzes the conversion of GTP to 2,5-diamino-6-ribosylamino-4(3H)-pyrimidinone 5'-phosphate (DARP), formate and pyrophosphate. The protein is Riboflavin biosynthesis protein RibBA of Staphylococcus saprophyticus subsp. saprophyticus (strain ATCC 15305 / DSM 20229 / NCIMB 8711 / NCTC 7292 / S-41).